Here is a 69-residue protein sequence, read N- to C-terminus: Putative membrane protein insertion efficiency factor (69 aa).

This sequence belongs to the UPF0161 family.

The protein localises to the cell inner membrane. Could be involved in insertion of integral membrane proteins into the membrane. In Magnetococcus marinus (strain ATCC BAA-1437 / JCM 17883 / MC-1), this protein is Putative membrane protein insertion efficiency factor.